A 148-amino-acid polypeptide reads, in one-letter code: MSIIDNRKAHFDYHIEERYEAGLVLEGWEVKALRAGRGQIREGYVVIKHDEIFLIGTHISPLPEASTHITPDPVRTRKLLLHREEIKKLIGKVEQRGYTLVPLNFHYKGGRVKCDIALAKGKKLHDKRETEKKRDWEREKARIMRAGT.

Over residues 129-142 (ETEKKRDWEREKAR) the composition is skewed to basic and acidic residues. The tract at residues 129–148 (ETEKKRDWEREKARIMRAGT) is disordered.

It belongs to the SmpB family.

It localises to the cytoplasm. Required for rescue of stalled ribosomes mediated by trans-translation. Binds to transfer-messenger RNA (tmRNA), required for stable association of tmRNA with ribosomes. tmRNA and SmpB together mimic tRNA shape, replacing the anticodon stem-loop with SmpB. tmRNA is encoded by the ssrA gene; the 2 termini fold to resemble tRNA(Ala) and it encodes a 'tag peptide', a short internal open reading frame. During trans-translation Ala-aminoacylated tmRNA acts like a tRNA, entering the A-site of stalled ribosomes, displacing the stalled mRNA. The ribosome then switches to translate the ORF on the tmRNA; the nascent peptide is terminated with the 'tag peptide' encoded by the tmRNA and targeted for degradation. The ribosome is freed to recommence translation, which seems to be the essential function of trans-translation. The sequence is that of SsrA-binding protein from Burkholderia lata (strain ATCC 17760 / DSM 23089 / LMG 22485 / NCIMB 9086 / R18194 / 383).